A 128-amino-acid chain; its full sequence is Small ribosomal subunit protein uS9 (128 aa).

The protein belongs to the universal ribosomal protein uS9 family.

The chain is Small ribosomal subunit protein uS9 from Cytophaga hutchinsonii (strain ATCC 33406 / DSM 1761 / CIP 103989 / NBRC 15051 / NCIMB 9469 / D465).